A 454-amino-acid polypeptide reads, in one-letter code: MKKLFGTDGVRGVANVYPMTTEMAMQIGRAAAYIFRNGKRRHRIVIGKDTRLSGYMIENALVAGICSMGVDVLQVGPLPTPGIANITSSMRADAGVVISASHNPFQDNGIKFFSRDGFKLPDEMELRIEELIFSGKIDSLRPIATEVGKAYRIDDAVGRFVVFLKSTFPKDLDLSGLKIVLDCANGAAYKVAPAVLEELGAEVIAIGVKPNGTNINAGCGSLYPNIISEAVKEHRADLGIALDGDADRVIFVDEFGHEVDGDHIMAICATDMLKQNKLRENTLVATVMSNMGLDIAVKKAGGRVIKTAVGDRYVVEEMQKGGYNLGGEQSGHMIFLDHNTTGDGVLSALQVLAVMQRHNKRLSELAEVMIPLPQVLVNVRVTEKRDVMTIPEVAGLIGDIEAKVKDEGRILIRYSGTEPLLRVMLEGQDKYQITGWAKEIAELVEKNIGGSEHG.

Serine 101 serves as the catalytic Phosphoserine intermediate. 4 residues coordinate Mg(2+): serine 101, aspartate 243, aspartate 245, and aspartate 247. Position 101 is a phosphoserine (serine 101).

The protein belongs to the phosphohexose mutase family. Requires Mg(2+) as cofactor. Activated by phosphorylation.

It catalyses the reaction alpha-D-glucosamine 1-phosphate = D-glucosamine 6-phosphate. In terms of biological role, catalyzes the conversion of glucosamine-6-phosphate to glucosamine-1-phosphate. In Geotalea uraniireducens (strain Rf4) (Geobacter uraniireducens), this protein is Phosphoglucosamine mutase.